Here is a 302-residue protein sequence, read N- to C-terminus: Protoheme IX farnesyltransferase (302 aa).

9 helical membrane passes run 27 to 47 (VVAL…PGMV), 53 to 73 (LFGL…NHVI), 100 to 120 (LVFA…AVNV), 121 to 141 (LTAV…TVFL), 149 to 169 (IVWG…AVTG), 175 to 195 (PLLL…ALAI), 215 to 235 (VAFT…VSLV), 237 to 257 (FIIH…GIGF), and 273 to 293 (AMPT…LLLV).

The protein belongs to the UbiA prenyltransferase family. Protoheme IX farnesyltransferase subfamily.

The protein resides in the cell inner membrane. It catalyses the reaction heme b + (2E,6E)-farnesyl diphosphate + H2O = Fe(II)-heme o + diphosphate. Its pathway is porphyrin-containing compound metabolism; heme O biosynthesis; heme O from protoheme: step 1/1. Converts heme B (protoheme IX) to heme O by substitution of the vinyl group on carbon 2 of heme B porphyrin ring with a hydroxyethyl farnesyl side group. This chain is Protoheme IX farnesyltransferase, found in Thioalkalivibrio sulfidiphilus (strain HL-EbGR7).